Consider the following 169-residue polypeptide: Phosphopantetheine adenylyltransferase (169 aa).

Position 9 (T9) interacts with substrate. Residues 9–10 (TF) and H17 each bind ATP. Positions 41, 73, and 87 each coordinate substrate. ATP-binding positions include 88–90 (GLR), E98, and 123–129 (YQFISGT).

This sequence belongs to the bacterial CoaD family. In terms of assembly, homohexamer. Requires Mg(2+) as cofactor.

It localises to the cytoplasm. The catalysed reaction is (R)-4'-phosphopantetheine + ATP + H(+) = 3'-dephospho-CoA + diphosphate. It functions in the pathway cofactor biosynthesis; coenzyme A biosynthesis; CoA from (R)-pantothenate: step 4/5. Reversibly transfers an adenylyl group from ATP to 4'-phosphopantetheine, yielding dephospho-CoA (dPCoA) and pyrophosphate. This is Phosphopantetheine adenylyltransferase from Bordetella bronchiseptica (strain ATCC BAA-588 / NCTC 13252 / RB50) (Alcaligenes bronchisepticus).